Consider the following 549-residue polypeptide: Undecaprenyl phosphate-alpha-4-amino-4-deoxy-L-arabinose arabinosyl transferase (549 aa).

12 helical membrane-spanning segments follow: residues 9-29, 80-100, 112-132, 133-153, 176-196, 204-224, 256-276, 288-308, 312-332, 346-366, 376-396, and 402-422; these read LLLI…GLWI, LFGV…LAYL, SLAC…SGYA, NLDP…WHAL, FLTK…PYML, LLGY…PWAL, PWWF…GLLP, QAPV…FSLS, LPTY…HALV, NGLL…YLQL, FELF…LAQW, and AWAA…AAMP.

This sequence belongs to the glycosyltransferase 83 family.

Its subcellular location is the cell inner membrane. It carries out the reaction 4-amino-4-deoxy-alpha-L-arabinopyranosyl di-trans,octa-cis-undecaprenyl phosphate + lipid IVA = lipid IIA + di-trans,octa-cis-undecaprenyl phosphate.. It functions in the pathway lipopolysaccharide metabolism; 4-amino-4-deoxy-beta-L-arabinose-lipid A biosynthesis. Catalyzes the transfer of the L-Ara4N moiety of the glycolipid undecaprenyl phosphate-alpha-L-Ara4N to lipid A. The modified arabinose is attached to lipid A and is required for resistance to polymyxin and cationic antimicrobial peptides. This is Undecaprenyl phosphate-alpha-4-amino-4-deoxy-L-arabinose arabinosyl transferase from Pseudomonas aeruginosa (strain LESB58).